A 283-amino-acid chain; its full sequence is DegV domain-containing protein BH3627 (283 aa).

A DegV domain is found at 4-281 (IAIVTDSTAY…EGSIGLSWYI (278 aa)). Residues Thr62 and Ser95 each coordinate hexadecanoate.

Its function is as follows. May bind long-chain fatty acids, such as palmitate, and may play a role in lipid transport or fatty acid metabolism. In Halalkalibacterium halodurans (strain ATCC BAA-125 / DSM 18197 / FERM 7344 / JCM 9153 / C-125) (Bacillus halodurans), this protein is DegV domain-containing protein BH3627.